Consider the following 395-residue polypeptide: 1-deoxy-D-xylulose 5-phosphate reductoisomerase (395 aa).

Positions 10, 11, 12, 13, 38, and 123 each coordinate NADPH. Lysine 124 provides a ligand contact to 1-deoxy-D-xylulose 5-phosphate. An NADPH-binding site is contributed by glutamate 125. Aspartate 149 contacts Mn(2+). 1-deoxy-D-xylulose 5-phosphate contacts are provided by serine 150, glutamate 151, serine 185, and histidine 208. Glutamate 151 contacts Mn(2+). Residue glycine 214 coordinates NADPH. 1-deoxy-D-xylulose 5-phosphate is bound by residues serine 221, asparagine 226, lysine 227, and glutamate 230. A Mn(2+)-binding site is contributed by glutamate 230.

The protein belongs to the DXR family. Mg(2+) serves as cofactor. Mn(2+) is required as a cofactor.

The catalysed reaction is 2-C-methyl-D-erythritol 4-phosphate + NADP(+) = 1-deoxy-D-xylulose 5-phosphate + NADPH + H(+). Its pathway is isoprenoid biosynthesis; isopentenyl diphosphate biosynthesis via DXP pathway; isopentenyl diphosphate from 1-deoxy-D-xylulose 5-phosphate: step 1/6. Its function is as follows. Catalyzes the NADPH-dependent rearrangement and reduction of 1-deoxy-D-xylulose-5-phosphate (DXP) to 2-C-methyl-D-erythritol 4-phosphate (MEP). In Shewanella woodyi (strain ATCC 51908 / MS32), this protein is 1-deoxy-D-xylulose 5-phosphate reductoisomerase.